The chain runs to 191 residues: MALKIAQELRAGNVFMIGNDAMVVLKTEYSRSGRSGAVVKMKYKNLLTGAGGESVFNADDKMDQVILEKKEAEYSYFDGTMYVFMDPVTYEQYNVEPAAMGSALNYLQDGMKVEVTFYNENAISVELPTTVVREIVYTEPAVKGDTSSGKVLKAARINDNEEFTIMVPLFCNIGEKIEIDTRTDEYRSRAK.

Belongs to the elongation factor P family.

Its subcellular location is the cytoplasm. It participates in protein biosynthesis; polypeptide chain elongation. In terms of biological role, involved in peptide bond synthesis. Stimulates efficient translation and peptide-bond synthesis on native or reconstituted 70S ribosomes in vitro. Probably functions indirectly by altering the affinity of the ribosome for aminoacyl-tRNA, thus increasing their reactivity as acceptors for peptidyl transferase. The sequence is that of Elongation factor P from Ralstonia pickettii (strain 12J).